The following is a 422-amino-acid chain: Gamma-glutamyl phosphate reductase (422 aa).

It belongs to the gamma-glutamyl phosphate reductase family.

It localises to the cytoplasm. It carries out the reaction L-glutamate 5-semialdehyde + phosphate + NADP(+) = L-glutamyl 5-phosphate + NADPH + H(+). The protein operates within amino-acid biosynthesis; L-proline biosynthesis; L-glutamate 5-semialdehyde from L-glutamate: step 2/2. Functionally, catalyzes the NADPH-dependent reduction of L-glutamate 5-phosphate into L-glutamate 5-semialdehyde and phosphate. The product spontaneously undergoes cyclization to form 1-pyrroline-5-carboxylate. The sequence is that of Gamma-glutamyl phosphate reductase from Chloroflexus aggregans (strain MD-66 / DSM 9485).